The sequence spans 791 residues: Calcium-transporting ATPase CtpE (791 aa).

3 helical membrane-spanning segments follow: residues L53 to I73, I213 to L233, and V252 to V272. The active-site 4-aspartylphosphate intermediate is D299. Positions 299, 301, and 530 each coordinate Mg(2+). Helical transmembrane passes span V596 to G616, I627 to A647, A664 to Y684, A697 to A717, V725 to Q745, and V757 to W777.

The protein belongs to the cation transport ATPase (P-type) (TC 3.A.3) family.

The protein resides in the cell membrane. The enzyme catalyses Ca(2+)(in) + ATP + H2O = Ca(2+)(out) + ADP + phosphate + H(+). Functionally, P-type ATPase involved in specific uptake of calcium. Essential for growth and maintenance of cell surface integrity under Ca(2+)-deficient conditions. This is Calcium-transporting ATPase CtpE from Mycolicibacterium smegmatis (strain ATCC 700084 / mc(2)155) (Mycobacterium smegmatis).